Consider the following 421-residue polypeptide: ATP phosphoribosyltransferase regulatory subunit (421 aa).

It belongs to the class-II aminoacyl-tRNA synthetase family. HisZ subfamily. In terms of assembly, heteromultimer composed of HisG and HisZ subunits.

It localises to the cytoplasm. Its pathway is amino-acid biosynthesis; L-histidine biosynthesis; L-histidine from 5-phospho-alpha-D-ribose 1-diphosphate: step 1/9. Functionally, required for the first step of histidine biosynthesis. May allow the feedback regulation of ATP phosphoribosyltransferase activity by histidine. In Clostridium novyi (strain NT), this protein is ATP phosphoribosyltransferase regulatory subunit.